A 390-amino-acid polypeptide reads, in one-letter code: Neutrophil cytosol factor 1 (390 aa).

One can recognise a PX domain in the interval T4–L125. SH3 domains follow at residues I156–S215 and Y226–Q285. The tract at residues Q285–V390 is disordered. Phosphoserine occurs at positions 303 and 304. Positions H309–R318 are enriched in basic residues. Phosphoserine is present on residues S320, S328, S345, and S348.

As to quaternary structure, component of the phagocyte NADPH oxidase complex composed of an obligatory core heterodimer formed by the membrane proteins CYBA and CYBB and the cytosolic regulatory subunits NCF1/p47-phox, NCF2/p67-phox, NCF4/p40-phox and the small GTPase RAC1 or RAC2. Part of a cytosolic complex composed at least by NCF1, NCF2 and NCF4. Interacts (via C-terminus) with NCF2 (via the C-terminal SH3 domain). Interacts with NCF4. Interacts with CYBB. Interacts (via the second SH3 domain) with CYBA; interaction is phosphorylation-dependent. Interacts with NOXA1. Interacts with ADAM15. Interacts with TRAF4. Interacts with FASLG. Interacts with PARK7 (via C-terminus); the interaction is enhanced by LPS and modulates NCF1 phosphorylation and membrane translocation. Phosphorylated by PRKCD; phosphorylation induces activation of NCF1, leading to assembly and activation of the NADPH oxidase complex. As to expression, detected in peripheral blood monocytes and neutrophils (at protein level).

It is found in the cytoplasm. The protein resides in the cytosol. It localises to the membrane. Functionally, subunit of the phagocyte NADPH oxidase complex that mediates the transfer of electrons from cytosolic NADPH to O2 to produce the superoxide anion (O2(-)). In the activated complex, electrons are first transferred from NADPH to flavin adenine dinucleotide (FAD) and subsequently transferred via two heme molecules to molecular oxygen, producing superoxide through an outer-sphere reaction. Activation of the NADPH oxidase complex is initiated by the assembly of cytosolic subunits of the NADPH oxidase complex with the core NADPH oxidase complex to form a complex at the plasma membrane or phagosomal membrane. This activation process is initiated by phosphorylation dependent binding of the cytosolic NCF1/p47-phox subunit to the C-terminus of CYBA/p22-phox. The sequence is that of Neutrophil cytosol factor 1 from Homo sapiens (Human).